Consider the following 95-residue polypeptide: Aspartyl/glutamyl-tRNA(Asn/Gln) amidotransferase subunit C (95 aa).

Belongs to the GatC family. As to quaternary structure, heterotrimer of A, B and C subunits.

The catalysed reaction is L-glutamyl-tRNA(Gln) + L-glutamine + ATP + H2O = L-glutaminyl-tRNA(Gln) + L-glutamate + ADP + phosphate + H(+). It carries out the reaction L-aspartyl-tRNA(Asn) + L-glutamine + ATP + H2O = L-asparaginyl-tRNA(Asn) + L-glutamate + ADP + phosphate + 2 H(+). Its function is as follows. Allows the formation of correctly charged Asn-tRNA(Asn) or Gln-tRNA(Gln) through the transamidation of misacylated Asp-tRNA(Asn) or Glu-tRNA(Gln) in organisms which lack either or both of asparaginyl-tRNA or glutaminyl-tRNA synthetases. The reaction takes place in the presence of glutamine and ATP through an activated phospho-Asp-tRNA(Asn) or phospho-Glu-tRNA(Gln). This chain is Aspartyl/glutamyl-tRNA(Asn/Gln) amidotransferase subunit C, found in Magnetococcus marinus (strain ATCC BAA-1437 / JCM 17883 / MC-1).